The chain runs to 352 residues: Photosystem II D2 protein (352 aa).

Residues 40 to 60 (CAYLALGGWLTGTSFVTSWYT) form a helical membrane-spanning segment. Histidine 117 is a chlorophyll a binding site. A helical transmembrane segment spans residues 124–140 (GFMLRQFEIARLVGVRP). Pheophytin a contacts are provided by glutamine 129 and asparagine 142. The chain crosses the membrane as a helical span at residues 152-165 (VFVSVFLMYPLGQS). Histidine 197 lines the chlorophyll a pocket. The helical transmembrane segment at 207-227 (GALLCAIHGATVENTLFEDSE) threads the bilayer. A plastoquinone-binding residues include histidine 214 and phenylalanine 261. A Fe cation-binding site is contributed by histidine 214. Histidine 268 contacts Fe cation. Residues 278–294 (GLWMSSIGIVGLALNLR) traverse the membrane as a helical segment.

It belongs to the reaction center PufL/M/PsbA/D family. As to quaternary structure, PSII is composed of 1 copy each of membrane proteins PsbA, PsbB, PsbC, PsbD, PsbE, PsbF, PsbH, PsbI, PsbJ, PsbK, PsbL, PsbM, PsbT, PsbX, PsbY, PsbZ, Psb30/Ycf12, peripheral proteins PsbO, CyanoQ (PsbQ), PsbU, PsbV and a large number of cofactors. It forms dimeric complexes. Requires The D1/D2 heterodimer binds P680, chlorophylls that are the primary electron donor of PSII, and subsequent electron acceptors. It shares a non-heme iron and each subunit binds pheophytin, quinone, additional chlorophylls, carotenoids and lipids. There is also a Cl(-1) ion associated with D1 and D2, which is required for oxygen evolution. The PSII complex binds additional chlorophylls, carotenoids and specific lipids. as cofactor.

The protein resides in the cellular thylakoid membrane. It carries out the reaction 2 a plastoquinone + 4 hnu + 2 H2O = 2 a plastoquinol + O2. In terms of biological role, photosystem II (PSII) is a light-driven water:plastoquinone oxidoreductase that uses light energy to abstract electrons from H(2)O, generating O(2) and a proton gradient subsequently used for ATP formation. It consists of a core antenna complex that captures photons, and an electron transfer chain that converts photonic excitation into a charge separation. The D1/D2 (PsbA/PsbD) reaction center heterodimer binds P680, the primary electron donor of PSII as well as several subsequent electron acceptors. D2 is needed for assembly of a stable PSII complex. This is Photosystem II D2 protein from Synechococcus elongatus (strain ATCC 33912 / PCC 7942 / FACHB-805) (Anacystis nidulans R2).